We begin with the raw amino-acid sequence, 647 residues long: Nucleolar GTP-binding protein 1 (647 aa).

Residues 168–340 (RTLLICGYPN…VRNKACEKLL (173 aa)) enclose the OBG-type G domain. GTP-binding positions include 174–181 (GYPNVGKS), 220–224 (DTPGI), and 288–291 (NKTD). Ser563 carries the phosphoserine modification. Residues 594–647 (ADGSMRSKADRMAKMERRERNRHAKQGESDRHNAVSLSKHLFSGKRGVGKTDFR) are disordered. Residues 598-626 (MRSKADRMAKMERRERNRHAKQGESDRHN) show a composition bias toward basic and acidic residues.

It belongs to the TRAFAC class OBG-HflX-like GTPase superfamily. OBG GTPase family. NOG subfamily. In terms of assembly, associated with nucleolar and cytoplasmic pre-60S particles. Directly interacts with RLP24.

Its subcellular location is the nucleus. The protein resides in the nucleolus. Involved in the biogenesis of the 60S ribosomal subunit. This is Nucleolar GTP-binding protein 1 (NOG1) from Saccharomyces cerevisiae (strain ATCC 204508 / S288c) (Baker's yeast).